The primary structure comprises 411 residues: Lissencephaly-1 homolog (411 aa).

Residues 9-41 (QREELNQAIADYLGSNGYADSLETFRKEADLST) form the LisH domain. A coiled-coil region spans residues 56 to 83 (TSVIRLQKKVMELEAKLTEAEKEVIEGA). WD repeat units lie at residues 106–147 (GHRA…RSLK), 148–187 (GHTD…ECIK), 191–230 (GHDH…CVKT), 233–272 (GHRE…CKVE), 275–334 (DHEH…CLLT), 337–376 (GHDN…CMKT), and 379–411 (AHQH…WECR).

The protein belongs to the WD repeat LIS1/nudF family.

It localises to the cytoplasm. The protein resides in the cytoskeleton. It is found in the microtubule organizing center. The protein localises to the centrosome. In terms of biological role, positively regulates the activity of the minus-end directed microtubule motor protein dynein. May enhance dynein-mediated microtubule sliding by targeting dynein to the microtubule plus end. Required for several dynein- and microtubule-dependent processes. The chain is Lissencephaly-1 homolog from Drosophila sechellia (Fruit fly).